Reading from the N-terminus, the 133-residue chain is Holo-[acyl-carrier-protein] synthase (133 aa).

Asp8 and Glu56 together coordinate Mg(2+).

Belongs to the P-Pant transferase superfamily. AcpS family. The cofactor is Mg(2+).

Its subcellular location is the cytoplasm. It catalyses the reaction apo-[ACP] + CoA = holo-[ACP] + adenosine 3',5'-bisphosphate + H(+). Functionally, transfers the 4'-phosphopantetheine moiety from coenzyme A to a Ser of acyl-carrier-protein. The polypeptide is Holo-[acyl-carrier-protein] synthase (Clostridium perfringens (strain ATCC 13124 / DSM 756 / JCM 1290 / NCIMB 6125 / NCTC 8237 / Type A)).